The following is a 261-amino-acid chain: Metallo-beta-lactamase fold-containing protein ST1585 (261 aa).

7 residues coordinate Zn(2+): His58, His60, Asp62, His63, His148, Asp165, and His207.

Belongs to the metallo-beta-lactamase superfamily. Monomer.

This is Metallo-beta-lactamase fold-containing protein ST1585 from Sulfurisphaera tokodaii (strain DSM 16993 / JCM 10545 / NBRC 100140 / 7) (Sulfolobus tokodaii).